A 417-amino-acid polypeptide reads, in one-letter code: Serine hydroxymethyltransferase (417 aa).

K54 is subject to N6-acetyllysine. (6S)-5,6,7,8-tetrahydrofolate contacts are provided by residues L121 and 125–127 (GHL). K229 carries the post-translational modification N6-(pyridoxal phosphate)lysine. N6-acetyllysine occurs at positions 250, 285, and 354. 355 to 357 (SPF) contributes to the (6S)-5,6,7,8-tetrahydrofolate binding site. K375 carries the post-translational modification N6-acetyllysine.

This sequence belongs to the SHMT family. In terms of assembly, homodimer. Pyridoxal 5'-phosphate is required as a cofactor.

It is found in the cytoplasm. The catalysed reaction is (6R)-5,10-methylene-5,6,7,8-tetrahydrofolate + glycine + H2O = (6S)-5,6,7,8-tetrahydrofolate + L-serine. The protein operates within one-carbon metabolism; tetrahydrofolate interconversion. Its pathway is amino-acid biosynthesis; glycine biosynthesis; glycine from L-serine: step 1/1. Catalyzes the reversible interconversion of serine and glycine with tetrahydrofolate (THF) serving as the one-carbon carrier. This reaction serves as the major source of one-carbon groups required for the biosynthesis of purines, thymidylate, methionine, and other important biomolecules. Also exhibits THF-independent aldolase activity toward beta-hydroxyamino acids, producing glycine and aldehydes, via a retro-aldol mechanism. This Escherichia coli O157:H7 protein is Serine hydroxymethyltransferase.